The primary structure comprises 172 residues: Translation initiation factor IF-3 (172 aa).

It belongs to the IF-3 family. Monomer.

It is found in the cytoplasm. Functionally, IF-3 binds to the 30S ribosomal subunit and shifts the equilibrium between 70S ribosomes and their 50S and 30S subunits in favor of the free subunits, thus enhancing the availability of 30S subunits on which protein synthesis initiation begins. This is Translation initiation factor IF-3 from Haemophilus influenzae (strain ATCC 51907 / DSM 11121 / KW20 / Rd).